The following is a 529-amino-acid chain: Meiosis 1 arrest protein (529 aa).

Disordered regions lie at residues 180-201 and 504-529; these read KGIQERSDSPSPTEEPSNDESS and AASKASSAAFLPSDSEEGEEERPSHT. The segment covering 188 to 200 has biased composition (polar residues); sequence SPSPTEEPSNDES. Ser-516 is subject to Phosphoserine.

In terms of tissue distribution, expressed in germ cells of the testis. Expressed from spermatogonia to spermatids. Expressed at very low levels in lung, stomach, thymus. Not detected in Sertoli cells.

It is found in the cytoplasm. Functionally, required for meiosis I progression during spermatogenesis. The sequence is that of Meiosis 1 arrest protein (M1ap) from Mus musculus (Mouse).